The following is a 432-amino-acid chain: MSTQMSVFLSHEVAAPQWGEKALVSFNEQGALIHTGESTDLTKIQRAARKFDVQGIKSVVLAGDGWDVEAIWAFHQGYRNPKKYSQLEWVALEEKAQAELEARIKATEFTRDIINKPAEEVAPRQLATMAAEFIRSVAPEGTVTARIVKDKDLLAEGWEGIYAVGRGSDRTSAMLQLDFNPTGDENAPVWACLVGKGITFDSGGYSIKASNFMDSMKADMGGSGTITGGLGLAIMRGLNKRVKLILCCAENMISGRALKLGDVITYKNGKTVEIMNTDAEGRLVLADGLIYASEQNPELIIDCATLTGAAKNALGNDYHALLTFDQALAQEALKSAAEEKEGLWPLPLAEFHREMLPSNFADLSNIGGGDYSPGASTAAAFLSYFVQDYQKGWLHFDCSGTYRKSASDKWSAGATGMGVCTLANLLVEQANK.

Residues Lys-196 and Asp-201 each contribute to the Mn(2+) site. Residue Lys-208 is part of the active site. Residues Asp-219, Asp-278, and Glu-280 each coordinate Mn(2+). Residue Arg-282 is part of the active site.

Belongs to the peptidase M17 family. In terms of assembly, homohexamer. Mn(2+) serves as cofactor.

The protein localises to the cytoplasm. The enzyme catalyses Release of an N-terminal amino acid, Xaa, from a peptide or arylamide. Xaa is preferably Glu or Asp but may be other amino acids, including Leu, Met, His, Cys and Gln.. In terms of biological role, probably plays an important role in intracellular peptide degradation. This chain is Peptidase B, found in Vibrio vulnificus (strain CMCP6).